Consider the following 188-residue polypeptide: dCTP deaminase (188 aa).

DCTP contacts are provided by residues K111–R116, T135–E137, Q156, Y170, and Q180. E137 functions as the Proton donor/acceptor in the catalytic mechanism.

Belongs to the dCTP deaminase family. As to quaternary structure, homotrimer.

The enzyme catalyses dCTP + H2O + H(+) = dUTP + NH4(+). It participates in pyrimidine metabolism; dUMP biosynthesis; dUMP from dCTP (dUTP route): step 1/2. Functionally, catalyzes the deamination of dCTP to dUTP. This chain is dCTP deaminase, found in Pseudomonas savastanoi pv. phaseolicola (strain 1448A / Race 6) (Pseudomonas syringae pv. phaseolicola (strain 1448A / Race 6)).